The chain runs to 146 residues: Hemoglobin subunit beta (146 aa).

Val-1 bears the N-acetylvaline mark. Positions 2–146 (HLTGEEKSTV…VATALAHKYH (145 aa)) constitute a Globin domain. Phosphoserine is present on Ser-44. Lys-59 carries the post-translational modification N6-acetyllysine. His-63 is a binding site for heme b. Lys-82 is modified (N6-acetyllysine). Residue His-92 participates in heme b binding. Position 93 is an S-nitrosocysteine (Cys-93). Lys-144 is subject to N6-acetyllysine.

This sequence belongs to the globin family. Heterotetramer of two alpha chains and two beta chains. As to expression, red blood cells.

In terms of biological role, involved in oxygen transport from the lung to the various peripheral tissues. The chain is Hemoglobin subunit beta (HBB) from Macrotus californicus (Californian leaf-nosed bat).